Here is a 260-residue protein sequence, read N- to C-terminus: Malonyl-[acyl-carrier protein] O-methyltransferase (260 aa).

Belongs to the methyltransferase superfamily.

The catalysed reaction is malonyl-[ACP] + S-adenosyl-L-methionine = malonyl-[ACP] methyl ester + S-adenosyl-L-homocysteine. It participates in cofactor biosynthesis; biotin biosynthesis. In terms of biological role, converts the free carboxyl group of a malonyl-thioester to its methyl ester by transfer of a methyl group from S-adenosyl-L-methionine (SAM). It allows to synthesize pimeloyl-ACP via the fatty acid synthetic pathway. The polypeptide is Malonyl-[acyl-carrier protein] O-methyltransferase (Chlorobium phaeovibrioides (strain DSM 265 / 1930) (Prosthecochloris vibrioformis (strain DSM 265))).